The following is a 208-amino-acid chain: MKVVEVKHPLVRHKVGLMREADISTKRFRELATEVGSLLTYEATADFETETVTIEGWNGPVTIEQLKGKKVTVVPILRAGLGMMDGVLEHLPSARISVVGIYRDEETLQPVPYFEKIVSNVDERIALVVDPMLATGGSMIATIDLLKKRGCTSIKALVLVAAPEGIKALELAHPDIELYTASIDDCLNEQGYILPGLGDAGDKIFGTK.

5-phospho-alpha-D-ribose 1-diphosphate contacts are provided by residues arginine 78, arginine 103, and 130–138 (DPMLATGGS). Uracil-binding positions include isoleucine 193 and 198-200 (GDA). Position 199 (aspartate 199) interacts with 5-phospho-alpha-D-ribose 1-diphosphate.

The protein belongs to the UPRTase family. It depends on Mg(2+) as a cofactor.

The catalysed reaction is UMP + diphosphate = 5-phospho-alpha-D-ribose 1-diphosphate + uracil. It participates in pyrimidine metabolism; UMP biosynthesis via salvage pathway; UMP from uracil: step 1/1. With respect to regulation, allosterically activated by GTP. In terms of biological role, catalyzes the conversion of uracil and 5-phospho-alpha-D-ribose 1-diphosphate (PRPP) to UMP and diphosphate. The polypeptide is Uracil phosphoribosyltransferase (Shewanella frigidimarina (strain NCIMB 400)).